Reading from the N-terminus, the 118-residue chain is Holo-[acyl-carrier-protein] synthase (118 aa).

Residues D8 and E58 each coordinate Mg(2+).

It belongs to the P-Pant transferase superfamily. AcpS family. It depends on Mg(2+) as a cofactor.

The protein resides in the cytoplasm. The catalysed reaction is apo-[ACP] + CoA = holo-[ACP] + adenosine 3',5'-bisphosphate + H(+). Functionally, transfers the 4'-phosphopantetheine moiety from coenzyme A to a Ser of acyl-carrier-protein. The polypeptide is Holo-[acyl-carrier-protein] synthase (Listeria welshimeri serovar 6b (strain ATCC 35897 / DSM 20650 / CCUG 15529 / CIP 8149 / NCTC 11857 / SLCC 5334 / V8)).